Consider the following 195-residue polypeptide: Pyridoxal 5'-phosphate synthase subunit PdxT (195 aa).

Position 46-48 (46-48 (GES)) interacts with L-glutamine. C78 functions as the Nucleophile in the catalytic mechanism. L-glutamine is bound by residues R107 and 136 to 137 (IR). Catalysis depends on charge relay system residues H173 and E175.

Belongs to the glutaminase PdxT/SNO family. As to quaternary structure, in the presence of PdxS, forms a dodecamer of heterodimers. Only shows activity in the heterodimer.

The catalysed reaction is aldehydo-D-ribose 5-phosphate + D-glyceraldehyde 3-phosphate + L-glutamine = pyridoxal 5'-phosphate + L-glutamate + phosphate + 3 H2O + H(+). The enzyme catalyses L-glutamine + H2O = L-glutamate + NH4(+). It participates in cofactor biosynthesis; pyridoxal 5'-phosphate biosynthesis. Functionally, catalyzes the hydrolysis of glutamine to glutamate and ammonia as part of the biosynthesis of pyridoxal 5'-phosphate. The resulting ammonia molecule is channeled to the active site of PdxS. The chain is Pyridoxal 5'-phosphate synthase subunit PdxT from Dehalococcoides mccartyi (strain ATCC BAA-2100 / JCM 16839 / KCTC 5957 / BAV1).